Here is a 527-residue protein sequence, read N- to C-terminus: Coatomer subunit delta (527 aa).

The span at 166–175 (IDKSKIEKNK) shows a compositional bias: basic and acidic residues. Disordered stretches follow at residues 166–187 (IDKS…SMGS) and 217–250 (SDVD…KSGK). 2 stretches are compositionally biased toward low complexity: residues 177-187 (GGFSSMGSMGS) and 239-250 (KSSGMKLGKSGK). Residues 282 to 527 (TDPFTLTVEE…QLIAQNYQVI (246 aa)) enclose the MHD domain.

It belongs to the adaptor complexes medium subunit family. Delta-COP subfamily. In terms of assembly, oligomeric complex that consists of at least the alpha, beta, beta', gamma, delta, epsilon and zeta subunits.

The protein resides in the cytoplasm. It is found in the golgi apparatus membrane. It localises to the cytoplasmic vesicle. The protein localises to the COPI-coated vesicle membrane. In terms of biological role, the coatomer is a cytosolic protein complex that binds to dilysine motifs and reversibly associates with Golgi non-clathrin-coated vesicles, which further mediate biosynthetic protein transport from the ER, via the Golgi up to the trans Golgi network. Coatomer complex is required for budding from Golgi membranes, and is essential for the retrograde Golgi-to-ER transport of dilysine-tagged proteins. The sequence is that of Coatomer subunit delta from Arabidopsis thaliana (Mouse-ear cress).